The sequence spans 229 residues: Putative N-acetylmannosamine-6-phosphate 2-epimerase (229 aa).

This sequence belongs to the NanE family.

The enzyme catalyses an N-acyl-D-glucosamine 6-phosphate = an N-acyl-D-mannosamine 6-phosphate. It functions in the pathway amino-sugar metabolism; N-acetylneuraminate degradation; D-fructose 6-phosphate from N-acetylneuraminate: step 3/5. Converts N-acetylmannosamine-6-phosphate (ManNAc-6-P) to N-acetylglucosamine-6-phosphate (GlcNAc-6-P). The sequence is that of Putative N-acetylmannosamine-6-phosphate 2-epimerase from Salmonella agona (strain SL483).